A 117-amino-acid polypeptide reads, in one-letter code: Large ribosomal subunit protein bL20 (117 aa).

The protein belongs to the bacterial ribosomal protein bL20 family.

Binds directly to 23S ribosomal RNA and is necessary for the in vitro assembly process of the 50S ribosomal subunit. It is not involved in the protein synthesizing functions of that subunit. The polypeptide is Large ribosomal subunit protein bL20 (Thermomicrobium roseum (strain ATCC 27502 / DSM 5159 / P-2)).